Here is a 398-residue protein sequence, read N- to C-terminus: Acetate kinase (398 aa).

Mg(2+) is bound at residue Asn7. Lys14 provides a ligand contact to ATP. Arg92 lines the substrate pocket. The Proton donor/acceptor role is filled by Asp149. Residues 208–212 (HLGNG), 283–285 (DCR), and 331–335 (GIGEN) contribute to the ATP site. Residue Glu385 participates in Mg(2+) binding.

The protein belongs to the acetokinase family. As to quaternary structure, homodimer. Mg(2+) is required as a cofactor. Requires Mn(2+) as cofactor.

It is found in the cytoplasm. It catalyses the reaction acetate + ATP = acetyl phosphate + ADP. Its pathway is metabolic intermediate biosynthesis; acetyl-CoA biosynthesis; acetyl-CoA from acetate: step 1/2. In terms of biological role, catalyzes the formation of acetyl phosphate from acetate and ATP. Can also catalyze the reverse reaction. In Fusobacterium nucleatum subsp. nucleatum (strain ATCC 25586 / DSM 15643 / BCRC 10681 / CIP 101130 / JCM 8532 / KCTC 2640 / LMG 13131 / VPI 4355), this protein is Acetate kinase.